We begin with the raw amino-acid sequence, 147 residues long: Deoxyuridine 5'-triphosphate nucleotidohydrolase (147 aa).

Substrate is bound by residues 63–65 (RSG), N76, and 80–82 (TID).

It belongs to the dUTPase family. Requires Mg(2+) as cofactor.

It carries out the reaction dUTP + H2O = dUMP + diphosphate + H(+). It functions in the pathway pyrimidine metabolism; dUMP biosynthesis; dUMP from dCTP (dUTP route): step 2/2. In terms of biological role, this enzyme is involved in nucleotide metabolism: it produces dUMP, the immediate precursor of thymidine nucleotides and it decreases the intracellular concentration of dUTP so that uracil cannot be incorporated into DNA. The polypeptide is Deoxyuridine 5'-triphosphate nucleotidohydrolase (Chlamydia abortus (strain DSM 27085 / S26/3) (Chlamydophila abortus)).